The following is a 494-amino-acid chain: NADH-quinone oxidoreductase subunit N (494 aa).

The next 14 membrane-spanning stretches (helical) occupy residues 13–33 (LIAL…MLAI), 43–63 (FVLT…AMGV), 82–102 (MALV…YLGG), 117–137 (LLIL…HLVG), 138–158 (LFIG…YAFF), 169–189 (YMVL…LLYA), 209–229 (LLVE…LSLV), 243–263 (PAPV…AVLL), 277–297 (LNEL…LLAL), 311–331 (IAHF…AVEA), 332–352 (IGVY…VITL), 380–400 (AVLT…GFIG), 412–432 (QLWW…FYYL), and 461–481 (IMLL…QPLL).

This sequence belongs to the complex I subunit 2 family. As to quaternary structure, NDH-1 is composed of 13 different subunits. Subunits NuoA, H, J, K, L, M, N constitute the membrane sector of the complex.

Its subcellular location is the cell inner membrane. The catalysed reaction is a quinone + NADH + 5 H(+)(in) = a quinol + NAD(+) + 4 H(+)(out). In terms of biological role, NDH-1 shuttles electrons from NADH, via FMN and iron-sulfur (Fe-S) centers, to quinones in the respiratory chain. The immediate electron acceptor for the enzyme in this species is believed to be ubiquinone. Couples the redox reaction to proton translocation (for every two electrons transferred, four hydrogen ions are translocated across the cytoplasmic membrane), and thus conserves the redox energy in a proton gradient. This Ectopseudomonas mendocina (strain ymp) (Pseudomonas mendocina) protein is NADH-quinone oxidoreductase subunit N.